A 461-amino-acid polypeptide reads, in one-letter code: 26S proteasome regulatory subunit 8 (461 aa).

185 to 192 (GPPGTGKT) is an ATP binding site.

Belongs to the AAA ATPase family.

Its subcellular location is the cytoplasm. It localises to the nucleus. In terms of biological role, the 26S proteasome is involved in the ATP-dependent degradation of ubiquitinated proteins. The regulatory (or ATPase) complex confers ATP dependency and substrate specificity to the 26S complex. This Xenopus laevis (African clawed frog) protein is 26S proteasome regulatory subunit 8 (psmc5).